We begin with the raw amino-acid sequence, 435 residues long: 3-ketoacyl-CoA thiolase (435 aa).

C98 serves as the catalytic Acyl-thioester intermediate. Catalysis depends on proton acceptor residues H391 and C421.

It belongs to the thiolase-like superfamily. Thiolase family. Heterotetramer of two alpha chains (FadJ) and two beta chains (FadI).

The protein localises to the cytoplasm. It catalyses the reaction an acyl-CoA + acetyl-CoA = a 3-oxoacyl-CoA + CoA. It participates in lipid metabolism; fatty acid beta-oxidation. Functionally, catalyzes the final step of fatty acid oxidation in which acetyl-CoA is released and the CoA ester of a fatty acid two carbons shorter is formed. The sequence is that of 3-ketoacyl-CoA thiolase from Vibrio parahaemolyticus serotype O3:K6 (strain RIMD 2210633).